Reading from the N-terminus, the 320-residue chain is Arginine/serine-rich protein 1 (320 aa).

Positions 1–22 (MKTEASPGRLHEDVKLIFDKKA) are enriched in basic and acidic residues. Disordered stretches follow at residues 1–180 (MKTE…SRER) and 215–299 (LKEM…ADIV). 2 stretches are compositionally biased toward low complexity: residues 24-48 (SGRS…SRGS) and 56-74 (TSSS…SNSR). Composition is skewed to basic residues over residues 75-102 (SRSR…RARS), 114-158 (RRRH…RYRC), and 166-175 (RSPRPYRSRS). Phosphoserine is present on residues serine 135 and serine 137. A compositionally biased stretch (basic and acidic residues) spans 215-238 (LKEMEQQEERKRRSSSDEEERVRV). The segment covering 271–293 (VFSNNNAIAKPSSSPTLSDSKVT) has biased composition (polar residues).

This sequence belongs to the RSRP family. Post-translationally, phosphorylated. Phosphorylation at Ser-135 and Ser-137 mediates the interaction with spliceosome proteins.

The protein localises to the nucleus. Its function is as follows. Probably acts as a spliceosomal factor that contributes to spliceosome assembly and regulates the isoform switching of proteins such as PARP6. The polypeptide is Arginine/serine-rich protein 1 (rsrp1) (Danio rerio (Zebrafish)).